Reading from the N-terminus, the 159-residue chain is Large ribosomal subunit protein uL10 (159 aa).

This sequence belongs to the universal ribosomal protein uL10 family. Part of the ribosomal stalk of the 50S ribosomal subunit. The N-terminus interacts with L11 and the large rRNA to form the base of the stalk. The C-terminus forms an elongated spine to which L12 dimers bind in a sequential fashion forming a multimeric L10(L12)X complex.

In terms of biological role, forms part of the ribosomal stalk, playing a central role in the interaction of the ribosome with GTP-bound translation factors. The chain is Large ribosomal subunit protein uL10 from Sulfurimonas denitrificans (strain ATCC 33889 / DSM 1251) (Thiomicrospira denitrificans (strain ATCC 33889 / DSM 1251)).